Reading from the N-terminus, the 43-residue chain is Potassium channel toxin gamma-KTx 4.13 (43 aa).

4 disulfide bridges follow: Cys-5–Cys-23, Cys-11–Cys-34, Cys-20–Cys-39, and Cys-24–Cys-41.

The protein belongs to the ergtoxin family. Gamma-KTx 4 subfamily. In terms of tissue distribution, expressed by the venom gland.

The protein resides in the secreted. Its function is as follows. Reversibly blocks Kv11/ERG potassium channels. In Centruroides noxius (Mexican scorpion), this protein is Potassium channel toxin gamma-KTx 4.13.